Reading from the N-terminus, the 182-residue chain is UPF0149 protein CGSHiGG_07585 (182 aa).

This sequence belongs to the UPF0149 family.

The protein is UPF0149 protein CGSHiGG_07585 of Haemophilus influenzae (strain PittGG).